The primary structure comprises 292 residues: NAD kinase (292 aa).

Residue Asp-72 is the Proton acceptor of the active site. Residues 72–73, 146–147, His-157, Arg-174, Asp-176, and 187–192 contribute to the NAD(+) site; these read DG, NE, and TAYSLS.

Belongs to the NAD kinase family. A divalent metal cation is required as a cofactor.

It is found in the cytoplasm. It carries out the reaction NAD(+) + ATP = ADP + NADP(+) + H(+). In terms of biological role, involved in the regulation of the intracellular balance of NAD and NADP, and is a key enzyme in the biosynthesis of NADP. Catalyzes specifically the phosphorylation on 2'-hydroxyl of the adenosine moiety of NAD to yield NADP. In Shewanella woodyi (strain ATCC 51908 / MS32), this protein is NAD kinase.